We begin with the raw amino-acid sequence, 348 residues long: Tetraacyldisaccharide 4'-kinase (348 aa).

Residue 54–61 (TVGGAGKT) participates in ATP binding.

The protein belongs to the LpxK family.

The enzyme catalyses a lipid A disaccharide + ATP = a lipid IVA + ADP + H(+). Its pathway is glycolipid biosynthesis; lipid IV(A) biosynthesis; lipid IV(A) from (3R)-3-hydroxytetradecanoyl-[acyl-carrier-protein] and UDP-N-acetyl-alpha-D-glucosamine: step 6/6. Transfers the gamma-phosphate of ATP to the 4'-position of a tetraacyldisaccharide 1-phosphate intermediate (termed DS-1-P) to form tetraacyldisaccharide 1,4'-bis-phosphate (lipid IVA). The protein is Tetraacyldisaccharide 4'-kinase of Agrobacterium fabrum (strain C58 / ATCC 33970) (Agrobacterium tumefaciens (strain C58)).